A 143-amino-acid chain; its full sequence is Transcription antitermination protein NusB (143 aa).

The protein belongs to the NusB family.

Involved in transcription antitermination. Required for transcription of ribosomal RNA (rRNA) genes. Binds specifically to the boxA antiterminator sequence of the ribosomal RNA (rrn) operons. This Streptomyces griseus subsp. griseus (strain JCM 4626 / CBS 651.72 / NBRC 13350 / KCC S-0626 / ISP 5235) protein is Transcription antitermination protein NusB.